We begin with the raw amino-acid sequence, 468 residues long: Chromosomal replication initiator protein DnaA (468 aa).

Positions 1–84 (MSSSLWLQCL…RFEVGSRRVA (84 aa)) are domain I, interacts with DnaA modulators. A domain II region spans residues 84–131 (AAPKPAPTRTPADVAAESSAPAQLQARKPVHKTWDDDAQVIADINHRS). Low complexity predominate over residues 85 to 95 (APKPAPTRTPA). The tract at residues 85–104 (APKPAPTRTPADVAAESSAP) is disordered. The tract at residues 132–348 (NVNPKHKFNN…GALNRVIANA (217 aa)) is domain III, AAA+ region. The ATP site is built by Gly176, Gly178, Lys179, and Thr180. The domain IV, binds dsDNA stretch occupies residues 349-468 (NFTGRPITID…YSNLIRTLSS (120 aa)).

The protein belongs to the DnaA family. Oligomerizes as a right-handed, spiral filament on DNA at oriC.

The protein localises to the cytoplasm. Its function is as follows. Plays an essential role in the initiation and regulation of chromosomal replication. ATP-DnaA binds to the origin of replication (oriC) to initiate formation of the DNA replication initiation complex once per cell cycle. Binds the DnaA box (a 9 base pair repeat at the origin) and separates the double-stranded (ds)DNA. Forms a right-handed helical filament on oriC DNA; dsDNA binds to the exterior of the filament while single-stranded (ss)DNA is stabiized in the filament's interior. The ATP-DnaA-oriC complex binds and stabilizes one strand of the AT-rich DNA unwinding element (DUE), permitting loading of DNA polymerase. After initiation quickly degrades to an ADP-DnaA complex that is not apt for DNA replication. Binds acidic phospholipids. In terms of biological role, complements a temperature-sensitive E.coli mutant, the DnaA consensus is 5'-TT(A/T)TNCACA-3'. The protein is Chromosomal replication initiator protein DnaA of Vibrio harveyi (Beneckea harveyi).